The sequence spans 131 residues: UPF0102 protein YraN (131 aa).

Positions 1–19 (MATVPTRSGSPRQLTTKQT) are enriched in polar residues. The tract at residues 1-21 (MATVPTRSGSPRQLTTKQTGD) is disordered.

The protein belongs to the UPF0102 family.

The sequence is that of UPF0102 protein YraN from Escherichia coli O7:K1 (strain IAI39 / ExPEC).